Reading from the N-terminus, the 716-residue chain is FLYWCH-type zinc finger-containing protein 1 (716 aa).

The tract at residues M1–K35 is disordered. S21 is modified (phosphoserine). The FLYWCH-type 1 zinc-finger motif lies at F116–H174. K134 participates in a covalent cross-link: Glycyl lysine isopeptide (Lys-Gly) (interchain with G-Cter in SUMO2). The segment at P191 to T231 is disordered. Low complexity predominate over residues L195–G204. S261 bears the Phosphoserine mark. The segment at F273 to H331 adopts an FLYWCH-type 2 zinc-finger fold. The residue at position 371 (S371) is a Phosphoserine. The disordered stretch occupies residues G377 to F421. Residue K393 forms a Glycyl lysine isopeptide (Lys-Gly) (interchain with G-Cter in SUMO2) linkage. The FLYWCH-type 3 zinc-finger motif lies at F421–H479. Position 503 is a phosphoserine (S503). The FLYWCH-type 4 zinc finger occupies F509–H567. S591 carries the phosphoserine modification. An FLYWCH-type 5 zinc finger spans residues F600 to H658. Residue K685 forms a Glycyl lysine isopeptide (Lys-Gly) (interchain with G-Cter in SUMO2) linkage. Phosphoserine is present on S696.

As to quaternary structure, interacts with CTNNB1 (when unphosphorylated), perhaps preventing interaction of CTNNB1 with TCF4, and thereby regulating transcription activation; phosphorylation of CTNNB1 may inhibit the interaction.

The protein localises to the nucleus. It is found in the chromosome. It localises to the centromere. Functionally, transcription cofactor. Negatively regulates transcription activation by catenin beta-1 CTNNB1, perhaps acting by competing with TCF4 for CTNNB1 binding. May play a role in DNA-damage response signaling. Binds specifically to DNA sequences at peri-centromeric chromatin loci. The sequence is that of FLYWCH-type zinc finger-containing protein 1 (FLYWCH1) from Homo sapiens (Human).